A 192-amino-acid chain; its full sequence is Late embryogenesis abundant protein 47 (192 aa).

The Nuclear localization signal (NLS) motif lies at 5–9 (QLQKP). 2 consecutive SMP domains span residues 68 to 125 (ITIG…LNAR) and 133 to 190 (TTLA…RINQ). The interval 146–174 (LPSDKAATRKDAEGVTGAEMRNDPHLTTY) is disordered. The segment covering 147 to 158 (PSDKAATRKDAE) has biased composition (basic and acidic residues).

This sequence belongs to the LEA type SMP family.

It localises to the cytoplasm. It is found in the nucleus. Functionally, LEA proteins are late embryonic proteins abundant in higher plant seed embryos. The function of those proteins is not known. The chain is Late embryogenesis abundant protein 47 from Arabidopsis thaliana (Mouse-ear cress).